The chain runs to 796 residues: Protein translocase subunit SecA 2 (796 aa).

ATP-binding positions include Gln84, 102 to 106 (GEGKT), and Asp496.

Belongs to the SecA family. Monomer and homodimer. Part of the essential Sec protein translocation apparatus which comprises SecA, SecYEG and auxiliary proteins SecDF. Other proteins may also be involved.

The protein resides in the cell membrane. It localises to the cytoplasm. It carries out the reaction ATP + H2O + cellular proteinSide 1 = ADP + phosphate + cellular proteinSide 2.. Its function is as follows. Part of the Sec protein translocase complex. Interacts with the SecYEG preprotein conducting channel. Has a central role in coupling the hydrolysis of ATP to the transfer of proteins into and across the cell membrane, serving as an ATP-driven molecular motor driving the stepwise translocation of polypeptide chains across the membrane. This is Protein translocase subunit SecA 2 from Staphylococcus aureus (strain Mu3 / ATCC 700698).